The sequence spans 71 residues: DNA-directed RNA polymerase subunit epsilon (71 aa).

The protein belongs to the RNA polymerase subunit epsilon family. Monomer. RNAP is composed of a core of 2 alpha, a beta and a beta' subunit. The core is associated with a delta subunit, and at least one of epsilon or omega. When a sigma factor is associated with the core the holoenzyme is formed, which can initiate transcription.

It catalyses the reaction RNA(n) + a ribonucleoside 5'-triphosphate = RNA(n+1) + diphosphate. A non-essential component of RNA polymerase (RNAP). Has a similar structure to bacteriophage T7 protein Gp2 (AC P03704), which is known to bind to RNAP in the DNA binding-cleft. Unlike Gp2 however, this protein does not inhibit transcription initiation. This Geobacillus stearothermophilus (strain DSM 13240 / CIP 106956 / 10) protein is DNA-directed RNA polymerase subunit epsilon.